The primary structure comprises 197 residues: Pyridoxal 5'-phosphate synthase subunit PdxT (197 aa).

50–52 contacts L-glutamine; it reads GES. Cys-82 functions as the Nucleophile in the catalytic mechanism. L-glutamine contacts are provided by residues Arg-111 and 140–141; that span reads IR. Catalysis depends on charge relay system residues His-176 and Glu-178.

This sequence belongs to the glutaminase PdxT/SNO family. As to quaternary structure, in the presence of PdxS, forms a dodecamer of heterodimers. Only shows activity in the heterodimer.

It catalyses the reaction aldehydo-D-ribose 5-phosphate + D-glyceraldehyde 3-phosphate + L-glutamine = pyridoxal 5'-phosphate + L-glutamate + phosphate + 3 H2O + H(+). The enzyme catalyses L-glutamine + H2O = L-glutamate + NH4(+). It participates in cofactor biosynthesis; pyridoxal 5'-phosphate biosynthesis. Its function is as follows. Catalyzes the hydrolysis of glutamine to glutamate and ammonia as part of the biosynthesis of pyridoxal 5'-phosphate. The resulting ammonia molecule is channeled to the active site of PdxS. The sequence is that of Pyridoxal 5'-phosphate synthase subunit PdxT from Streptomyces griseus subsp. griseus (strain JCM 4626 / CBS 651.72 / NBRC 13350 / KCC S-0626 / ISP 5235).